The following is a 396-amino-acid chain: Diels-Alderase mpsD (396 aa).

The protein belongs to the Diels-Alderase family.

The protein operates within secondary metabolite biosynthesis. In terms of biological role, diels-Alderase; part of the gene cluster that mediates the biosynthesis of macrophasetins, 3-decalinoyltetramic acids (DTAs) which feature a tetramate (pyrrolidine-2,4-dione) unit connected to a decalin fragment and that have potent bioactivities. The PKS-NRPS mpsA together with its associated enoylreductase partner mpsG incorporate one unit of acetyl-CoA, seven units of malonyl-CoA, and one unit of L-alanine to assemble the linear tetramic acid intermediate corresponding to the backbone of macrophasetins. Without the Diels-Alderase mpsD, the mpsA/G product can undergo the non-enzymatic intramolecular Diels-Alder (IMDA) reaction to generate both macrophasetin A and macrophasetin B. Catalyzed by mpsD, the linear tetramic acid intermediate is thoroughly converted to macrophasetin A via the endo-IMDA reaction in a regioselective and stereoselective manner. Finally, the cytochrome P450 monooxygenase mpsF catalyzes the hydroxylation at C20 to yield the end product macrophasetin C. This is Diels-Alderase mpsD from Macrophomina phaseolina (strain MS6) (Charcoal rot fungus).